The chain runs to 188 residues: Succinate dehydrogenase [ubiquinone] cytochrome b large subunit, mitochondrial (188 aa).

Residues 1-31 constitute a mitochondrion transit peptide; that stretch reads MSLLPYNATLCRVLRHNVKFIRSVQTSAARV. Over 32-69 the chain is Mitochondrial matrix; it reads SAEKTPIQVWGWDYLMRQRALKRPIAPHLTIYKPQMTW. Residues 70–95 form a helical membrane-spanning segment; it reads MVSGLHRVTGCAMAGTLLIGGVGFSV. 2 residues coordinate a rhodoquinol: Ser-72 and Arg-76. Residues Ser-72 and Arg-76 each coordinate a ubiquinone. Residues 96-113 are Mitochondrial intermembrane-facing; sequence LPLDFTTFVEFIRGLGIP. A helical membrane pass occupies residues 114–140; sequence WVILDTFKFIIAFPIAFHTLNGIRFIG. His-131 provides a ligand contact to heme b. Residues 141 to 153 are Mitochondrial matrix-facing; the sequence is FDMAKGTDIPSIY. Residues 154–176 traverse the membrane as a helical segment; the sequence is RGAYLVLGLAALISLAVVVYPRW. The Mitochondrial intermembrane segment spans residues 177–188; the sequence is ERHKKATLPTNH.

Belongs to the cytochrome b558 family. In terms of assembly, component of the mitochondrial electron transport chain complex II composed of four subunits: a flavoprotein (Fp), an iron-sulfur protein (Ip), and a large cytochrome b (CybL) subunit and a small cytochrome b (CybS) subunit. There are 2 developmental stage-specific forms of complex II which have the Ip and CybL subunits in common. Complex II from the free-living larvae (aerobic environment) acts as a succinate dehydrogenase and is composed of the common subunit Ip and CybL and the stage specific subunits FpL and CybSL. Complex II from parasitic larvae and adults (anaerobic environment) acts as a fumarate reductase and is composed of the common subunit Ip and CybL and the stage specific subunits FpA and CybSA. The cofactor is heme b. As to expression, expressed in adult muscles (at protein level).

It localises to the mitochondrion inner membrane. It functions in the pathway carbohydrate metabolism; tricarboxylic acid cycle; fumarate from succinate (eukaryal route): step 1/1. In terms of biological role, membrane-bound large subunit (CybL) of the mitochondrial electron transport chain complex II, which together with the membrane-bound small subunit (CybS), anchor the catalytic subunits to the inner mitochondria membrane. During the free-living egg-larvae stages, which occur in an aerobic environment, complex II acts as a succinate dehydrogenase by transferring electrons from succinate to ubiquinone. During the parasitic larvae and adult stages, which occur in an anaerobic environment, complex II acts as a fumarate reductase by transferring electrons from rhodoquinol to fumarate. The polypeptide is Succinate dehydrogenase [ubiquinone] cytochrome b large subunit, mitochondrial (Ascaris suum (Pig roundworm)).